An 80-amino-acid polypeptide reads, in one-letter code: Protein pegasus (80 aa).

The first 22 residues, 1–22 (MKLSAVLLAIALLALSLVQCLG), serve as a signal peptide directing secretion. The Kazal-like domain occupies 24-80 (PDPSTKCVMECDTQEYRSICAADDKGSTKTYRNLCVMKTENCLQNANFQKISDKECP). 3 disulfides stabilise this stretch: cysteine 30/cysteine 65, cysteine 34/cysteine 58, and cysteine 43/cysteine 79.

As to quaternary structure, interacts with wg; the interaction facilitates short-range diffusion of wg. As to expression, strongly expressed in the developing fly wing but is excluded from the presumptive wing margin.

The protein resides in the secreted. Functionally, increases short-range diffusion of the wingless/wg protein, enhancing its signaling and expression of target genes required for wing margin morphogenesis. May act as a serine protease inhibitor since it possess the Kazal serine protease inhibitor signature. In Drosophila melanogaster (Fruit fly), this protein is Protein pegasus.